Reading from the N-terminus, the 489-residue chain is Protein-export membrane protein SecD (489 aa).

The next 6 helical transmembrane spans lie at 17–37, 328–348, 356–376, 384–404, 428–448, and 450–470; these read VLIVLVLVILSVLSIYAIPPA, FIQIVCIAAAILGLLAVAFMV, SIVVPMILVNLSEIIILLGIA, LASIAGLIAVIGTGIDQLVVI, LGIITVSASTTIFAMLPLALM, and LSTLKGFAIITILGVLIGVIF.

It belongs to the SecD/SecF family. SecD subfamily. In terms of assembly, part of the protein translocation apparatus. Forms a complex with SecF.

The protein resides in the cell membrane. Its function is as follows. Involved in protein export. The chain is Protein-export membrane protein SecD from Methanolacinia petrolearia (strain DSM 11571 / OCM 486 / SEBR 4847) (Methanoplanus petrolearius).